Reading from the N-terminus, the 1489-residue chain is Sex-determining transformer protein 2 (1489 aa).

The signal sequence occupies residues methionine 1 to threonine 33. Transmembrane regions (helical) follow at residues methionine 454–phenylalanine 474, glycine 489–aspartate 509, leucine 513–isoleucine 533, tyrosine 600–aspartate 620, aspartate 622–methionine 642, alanine 749–isoleucine 769, isoleucine 931–glycine 951, leucine 958–phenylalanine 978, tyrosine 986–alanine 1006, valine 1041–isoleucine 1061, and alanine 1066–leucine 1086. The tract at residues glutamate 1138–alanine 1288 is interaction with fem-3. Disordered stretches follow at residues proline 1143–methionine 1176, leucine 1233–serine 1393, and arginine 1412–leucine 1489. 3 stretches are compositionally biased toward basic and acidic residues: residues aspartate 1275–lysine 1298, valine 1326–arginine 1340, and arginine 1423–valine 1433. An MX regulatory domain; required for tra-1 binding region spans residues cysteine 1402–arginine 1423. The span at valine 1444–proline 1456 shows a compositional bias: pro residues. The segment covering arginine 1460–serine 1482 has biased composition (basic and acidic residues).

Interacts with tra-1 and fem-3.

It is found in the membrane. In terms of biological role, plays a major role in controlling sexual cell fates. Promotes female development in XX animals where it sequesters one or more of the FEM proteins to the membrane thereby freeing the tra-1 protein (a putative transcription factor) to enter the nucleus and promote female development. In XO animals it acts as a receptor for her-1 which prevents it from binding to FEM proteins thereby repressing the activity of tra-1. Negatively regulates male development when bound to fem-3 and is required together with tra-1 for promoting spermatogenesis. Also required for feminizing tra-3 activity. In Caenorhabditis briggsae, this protein is Sex-determining transformer protein 2.